Consider the following 746-residue polypeptide: Exostosin-1 (746 aa).

At 1 to 7 the chain is on the cytoplasmic side; it reads MQAKKRY. The chain crosses the membrane as a helical; Signal-anchor for type II membrane protein span at residues 8-28; it reads FILLSAGSCLALLFYFGGVQF. The Lumenal segment spans residues 29-746; it reads RASRSHSRRE…RKKYRDIERL (718 aa). Residue Asn89 is glycosylated (N-linked (GlcNAc...) asparagine). 2 cysteine pairs are disulfide-bonded: Cys98–Cys103 and Cys109–Cys152. 2 residues coordinate a protein: Leu166 and Tyr203. Lys267, Lys269, Tyr271, and Arg280 together coordinate UDP. Cys298 and Cys312 are oxidised to a cystine. His300 is a binding site for a protein. UDP-binding residues include Tyr319 and Tyr324. N-linked (GlcNAc...) asparagine glycosylation is present at Asn330. 2 disulfide bridges follow: Cys334–Cys355 and Cys652–Cys704. Positions 346 and 349 each coordinate UDP.

The protein belongs to the glycosyltransferase 47 family. As to quaternary structure, part of the heparan sulfate polymerase, a dimeric complex composed of EXT1 and EXT2. Could also form homooligomeric complexes. Interacts with NDST1. In terms of processing, N-glycosylated.

It localises to the golgi apparatus membrane. The protein resides in the golgi apparatus. It is found in the cis-Golgi network membrane. The protein localises to the endoplasmic reticulum membrane. It carries out the reaction 3-O-{alpha-D-GlcNAc-[(1-&gt;4)-beta-D-GlcA-(1-&gt;4)-alpha-D-GlcNAc](n)-(1-&gt;4)-beta-D-GlcA-(1-&gt;3)-beta-D-Gal-(1-&gt;3)-beta-D-Gal-(1-&gt;4)-beta-D-Xyl}-L-seryl-[protein] + UDP-alpha-D-glucuronate = 3-O-{[(1-&gt;4)-beta-D-GlcA-(1-&gt;4)-alpha-D-GlcNAc](n+1)-(1-&gt;4)-beta-D-GlcA-(1-&gt;3)-beta-D-Gal-(1-&gt;3)-beta-D-Gal-(1-&gt;4)-beta-D-Xyl}-L-seryl-[protein] + UDP + H(+). The protein operates within protein modification; protein glycosylation. Its function is as follows. Glycosyltransferase forming with EXT2 the heterodimeric heparan sulfate polymerase which catalyzes the elongation of the heparan sulfate glycan backbone. Glycan backbone extension consists in the alternating transfer of (1-&gt;4)-beta-D-GlcA and (1-&gt;4)-alpha-D-GlcNAc residues from their respective UDP-sugar donors. Both EXT1 and EXT2 are required for the full activity of the polymerase since EXT1 bears the N-acetylglucosaminyl-proteoglycan 4-beta-glucuronosyltransferase activity within the complex while EXT2 carries the glucuronosyl-N-acetylglucosaminyl-proteoglycan 4-alpha-N-acetylglucosaminyltransferase activity. Heparan sulfate proteoglycans are ubiquitous components of the extracellular matrix and play an important role in tissue homeostasis and signaling. This is Exostosin-1 from Mus musculus (Mouse).